We begin with the raw amino-acid sequence, 477 residues long: Glycogen synthase (477 aa).

Lysine 15 contributes to the ADP-alpha-D-glucose binding site.

Belongs to the glycosyltransferase 1 family. Bacterial/plant glycogen synthase subfamily.

The enzyme catalyses [(1-&gt;4)-alpha-D-glucosyl](n) + ADP-alpha-D-glucose = [(1-&gt;4)-alpha-D-glucosyl](n+1) + ADP + H(+). The protein operates within glycan biosynthesis; glycogen biosynthesis. In terms of biological role, synthesizes alpha-1,4-glucan chains using ADP-glucose. The chain is Glycogen synthase from Clostridium acetobutylicum (strain ATCC 824 / DSM 792 / JCM 1419 / IAM 19013 / LMG 5710 / NBRC 13948 / NRRL B-527 / VKM B-1787 / 2291 / W).